A 172-amino-acid polypeptide reads, in one-letter code: Large ribosomal subunit protein uL10 (172 aa).

It belongs to the universal ribosomal protein uL10 family. In terms of assembly, part of the ribosomal stalk of the 50S ribosomal subunit. The N-terminus interacts with L11 and the large rRNA to form the base of the stalk. The C-terminus forms an elongated spine to which L12 dimers bind in a sequential fashion forming a multimeric L10(L12)X complex.

Forms part of the ribosomal stalk, playing a central role in the interaction of the ribosome with GTP-bound translation factors. The polypeptide is Large ribosomal subunit protein uL10 (Xanthobacter autotrophicus (strain ATCC BAA-1158 / Py2)).